A 423-amino-acid polypeptide reads, in one-letter code: MSQRSSELFERAQQLIPGGVNSPVRACLGVDSEPLFIARAAGSRLHTVDGETFIDFVESWGPMLLGHTHPEVTAAVHAAVDRGTSYGAPCEDEVVLAAKVVDALPGVDMVRMVNSGTEATMSALRLARGYTGRTKLVKFVGCYHGHADPFLASAGSGVATLSIPGTPGVPESTVRDTLLAPYNDLAAVKDLFALHGKDIAAIIVEAVAGNMGLVPPKAGFLEGLRELCDQHGALLIFDEVITGFRVSFGGAQQRFGITPDLTTLGKIIGGGLPVGAYGGKREIMQRIAPCGEVYQAGTLSGNPLAMAAGIATLDVLSRSDYAGLEARVSAFVKELEAILKGKGVPVRINTLASMFTVFFTNDPVTDFASAKTADGALYTSFYKQMRAQGIYLAPSPFEAAMVSFAHTDDDLAAMLDAARKVTF.

Lysine 266 bears the N6-(pyridoxal phosphate)lysine mark.

This sequence belongs to the class-III pyridoxal-phosphate-dependent aminotransferase family. HemL subfamily. In terms of assembly, homodimer. Requires pyridoxal 5'-phosphate as cofactor.

It localises to the cytoplasm. The catalysed reaction is (S)-4-amino-5-oxopentanoate = 5-aminolevulinate. The protein operates within porphyrin-containing compound metabolism; protoporphyrin-IX biosynthesis; 5-aminolevulinate from L-glutamyl-tRNA(Glu): step 2/2. This chain is Glutamate-1-semialdehyde 2,1-aminomutase, found in Nitratidesulfovibrio vulgaris (strain DP4) (Desulfovibrio vulgaris).